The sequence spans 403 residues: RNA-binding motif, single-stranded-interacting protein 1 (403 aa).

Residues proline 30 to tryptophan 56 are disordered. Residues serine 40–serine 54 show a composition bias toward low complexity. RRM domains follow at residues threonine 62–glutamine 135 and threonine 141–glycine 226. Threonine 208 carries the post-translational modification Phosphothreonine.

Its subcellular location is the nucleus. Its function is as follows. Single-stranded DNA binding protein that interacts with the region upstream of the C-myc gene. Binds specifically to the DNA sequence motif 5'-[AT]CT[AT][AT]T-3'. Probably has a role in DNA replication. The sequence is that of RNA-binding motif, single-stranded-interacting protein 1 (RBMS1) from Bos taurus (Bovine).